Reading from the N-terminus, the 265-residue chain is Capsule polysaccharide export inner-membrane protein CtrC (265 aa).

Transmembrane regions (helical) follow at residues 37 to 57 (IGFL…VLMW), 64 to 84 (NVSA…MMMW), 121 to 141 (IAGA…IGWI), 147 to 167 (IFYM…LGLV), 178 to 198 (FGKV…VFFF), and 236 to 256 (NPWY…AVVA). Residues 37–258 (IGFLWLFVEP…LLGLAVVARF (222 aa)) enclose the ABC transmembrane type-2 domain.

Belongs to the ABC-2 integral membrane protein family.

It localises to the cell inner membrane. Its function is as follows. May form an ATP-driven capsule polysaccharide export apparatus, in association with the CtrB and CtrD proteins. The polypeptide is Capsule polysaccharide export inner-membrane protein CtrC (ctrC) (Neisseria meningitidis serogroup A / serotype 4A (strain DSM 15465 / Z2491)).